The sequence spans 198 residues: Phosphoheptose isomerase (198 aa).

The SIS domain maps to 36-198 (MIGSLLNNGK…DCLLLGVEDQ (163 aa)). 51–53 (NGG) contacts substrate. 2 residues coordinate Zn(2+): histidine 60 and glutamate 64. Residues glutamate 64, 93-94 (ND), 119-121 (STS), serine 124, and glutamine 174 contribute to the substrate site. Residues glutamine 174 and histidine 182 each coordinate Zn(2+).

The protein belongs to the SIS family. GmhA subfamily. In terms of assembly, homotetramer. Requires Zn(2+) as cofactor.

It localises to the cytoplasm. It carries out the reaction 2 D-sedoheptulose 7-phosphate = D-glycero-alpha-D-manno-heptose 7-phosphate + D-glycero-beta-D-manno-heptose 7-phosphate. The protein operates within carbohydrate biosynthesis; D-glycero-D-manno-heptose 7-phosphate biosynthesis; D-glycero-alpha-D-manno-heptose 7-phosphate and D-glycero-beta-D-manno-heptose 7-phosphate from sedoheptulose 7-phosphate: step 1/1. Functionally, catalyzes the isomerization of sedoheptulose 7-phosphate in D-glycero-D-manno-heptose 7-phosphate. The chain is Phosphoheptose isomerase from Aromatoleum aromaticum (strain DSM 19018 / LMG 30748 / EbN1) (Azoarcus sp. (strain EbN1)).